Reading from the N-terminus, the 238-residue chain is Urease accessory protein UreF (238 aa).

This sequence belongs to the UreF family. As to quaternary structure, ureD, UreF and UreG form a complex that acts as a GTP-hydrolysis-dependent molecular chaperone, activating the urease apoprotein by helping to assemble the nickel containing metallocenter of UreC. The UreE protein probably delivers the nickel.

Its subcellular location is the cytoplasm. Functionally, required for maturation of urease via the functional incorporation of the urease nickel metallocenter. In Rhodopseudomonas palustris (strain BisA53), this protein is Urease accessory protein UreF.